A 429-amino-acid chain; its full sequence is Trigger factor (429 aa).

One can recognise a PPIase FKBP-type domain in the interval 161 to 246 (EDRVTIDFTG…LKKVEERELP (86 aa)).

It belongs to the FKBP-type PPIase family. Tig subfamily. In terms of assembly, homodimer and monomer. In vivo most of the ribosomes are in complex with monomeric TF. Uncomplexed TF, however, is in a monomer-dimer equilibrium with approximately two thirds of TF existing in a dimeric state.

It localises to the cytoplasm. The enzyme catalyses [protein]-peptidylproline (omega=180) = [protein]-peptidylproline (omega=0). Its function is as follows. Involved in protein export. Acts as a chaperone by maintaining the newly synthesized protein in an open conformation. Functions as a peptidyl-prolyl cis-trans isomerase. This is Trigger factor from Escherichia coli O45:K1 (strain S88 / ExPEC).